Here is a 125-residue protein sequence, read N- to C-terminus: Holo-[acyl-carrier-protein] synthase (125 aa).

Asp-9 and Glu-58 together coordinate Mg(2+).

Belongs to the P-Pant transferase superfamily. AcpS family. Mg(2+) is required as a cofactor.

The protein localises to the cytoplasm. It catalyses the reaction apo-[ACP] + CoA = holo-[ACP] + adenosine 3',5'-bisphosphate + H(+). In terms of biological role, transfers the 4'-phosphopantetheine moiety from coenzyme A to a Ser of acyl-carrier-protein. The polypeptide is Holo-[acyl-carrier-protein] synthase (Shewanella amazonensis (strain ATCC BAA-1098 / SB2B)).